The following is a 438-amino-acid chain: 23S rRNA (uracil(1939)-C(5))-methyltransferase RlmD (438 aa).

In terms of domain architecture, TRAM spans 10 to 68 (KTKNVQTITADILDLDYQGLGVAKINGKTWFIENALPHEKVECRILEDKRQYGHAIVKK). [4Fe-4S] cluster-binding residues include cysteine 81, cysteine 87, cysteine 90, and cysteine 168. Glutamine 271, phenylalanine 300, asparagine 305, glutamate 321, aspartate 348, and aspartate 369 together coordinate S-adenosyl-L-methionine. The Nucleophile role is filled by cysteine 395.

This sequence belongs to the class I-like SAM-binding methyltransferase superfamily. RNA M5U methyltransferase family. RlmD subfamily.

The catalysed reaction is uridine(1939) in 23S rRNA + S-adenosyl-L-methionine = 5-methyluridine(1939) in 23S rRNA + S-adenosyl-L-homocysteine + H(+). In terms of biological role, catalyzes the formation of 5-methyl-uridine at position 1939 (m5U1939) in 23S rRNA. The sequence is that of 23S rRNA (uracil(1939)-C(5))-methyltransferase RlmD from Haemophilus influenzae (strain ATCC 51907 / DSM 11121 / KW20 / Rd).